We begin with the raw amino-acid sequence, 322 residues long: Ribosomal RNA small subunit methyltransferase H (322 aa).

S-adenosyl-L-methionine-binding positions include 47–49, aspartate 67, phenylalanine 93, aspartate 112, and glutamine 119; that span reads GGH.

Belongs to the methyltransferase superfamily. RsmH family.

The protein resides in the cytoplasm. It catalyses the reaction cytidine(1402) in 16S rRNA + S-adenosyl-L-methionine = N(4)-methylcytidine(1402) in 16S rRNA + S-adenosyl-L-homocysteine + H(+). Specifically methylates the N4 position of cytidine in position 1402 (C1402) of 16S rRNA. The protein is Ribosomal RNA small subunit methyltransferase H of Stenotrophomonas maltophilia (strain R551-3).